We begin with the raw amino-acid sequence, 881 residues long: Putative leucine-rich repeat receptor-like protein kinase At2g19210 (881 aa).

An N-terminal signal peptide occupies residues 1–25 (MVHYNFLSLIIFACFFAVFVLLVRA). The Extracellular segment spans residues 26–518 (QDQSGFVSID…SDEKTKKNVY (493 aa)). N-linked (GlcNAc...) asparagine glycosylation is found at Asn-143, Asn-234, Asn-295, Asn-310, Asn-404, Asn-419, Asn-435, Asn-446, and Asn-462. LRR repeat units lie at residues 438–460 (LLHI…LGNL) and 462–483 (NLTE…KLLE). The chain crosses the membrane as a helical span at residues 519–539 (IIPLVASVVGVLGLVLAIALF). Over 540–881 (LLYKKRHRRG…FDSGMFPQAR (342 aa)) the chain is Cytoplasmic. A Protein kinase domain is found at 576–850 (NNFERVLGQG…HVVAELKESV (275 aa)). Residues 582–590 (LGQGGFGKV) and Lys-603 each bind ATP. The residue at position 648 (Tyr-648) is a Phosphotyrosine. Asp-699 serves as the catalytic Proton acceptor. Phosphothreonine is present on residues Thr-734 and Thr-739. Tyr-747 bears the Phosphotyrosine mark. Residues 851-881 (SRARAGGGSGASSVTDPAMTNFDSGMFPQAR) form a disordered region.

It belongs to the protein kinase superfamily. Ser/Thr protein kinase family.

It is found in the cell membrane. The catalysed reaction is L-seryl-[protein] + ATP = O-phospho-L-seryl-[protein] + ADP + H(+). It catalyses the reaction L-threonyl-[protein] + ATP = O-phospho-L-threonyl-[protein] + ADP + H(+). The chain is Putative leucine-rich repeat receptor-like protein kinase At2g19210 from Arabidopsis thaliana (Mouse-ear cress).